The primary structure comprises 673 residues: Transcription initiation factor IIB (673 aa).

The segment at 38 to 69 adopts a TFIIB-type zinc-finger fold; the sequence is EEIVCPICGSKEVVKDYERAEIVCAKCGCVIK. Residues cysteine 42, cysteine 45, cysteine 61, and cysteine 64 each contribute to the Zn(2+) site. Positions 238–357 constitute a DOD-type homing endonuclease domain; it reads ILGYIIAEGY…VIFLLLQIKE (120 aa). A run of 2 repeats spans residues 490–573 and 584–665.

It belongs to the TFIIB family. In terms of processing, this protein undergoes a protein self splicing that involves a post-translational excision of the intervening region (intein) followed by peptide ligation.

Stabilizes TBP binding to an archaeal box-A promoter. Also responsible for recruiting RNA polymerase II to the pre-initiation complex (DNA-TBP-TFIIB). This chain is Transcription initiation factor IIB (tfb), found in Methanocaldococcus jannaschii (strain ATCC 43067 / DSM 2661 / JAL-1 / JCM 10045 / NBRC 100440) (Methanococcus jannaschii).